We begin with the raw amino-acid sequence, 400 residues long: Chalcone synthase 7 (400 aa).

Cys168 is a catalytic residue.

The protein belongs to the thiolase-like superfamily. Chalcone/stilbene synthases family.

It carries out the reaction (E)-4-coumaroyl-CoA + 3 malonyl-CoA + 3 H(+) = 2',4,4',6'-tetrahydroxychalcone + 3 CO2 + 4 CoA. Its pathway is secondary metabolite biosynthesis; flavonoid biosynthesis. The primary product of this enzyme is 4,2',4',6'-tetrahydroxychalcone (also termed naringenin-chalcone or chalcone) which can under specific conditions spontaneously isomerize into naringenin. This Sorghum bicolor (Sorghum) protein is Chalcone synthase 7 (CHS7).